The primary structure comprises 115 residues: Large ribosomal subunit protein bL19 (115 aa).

The protein belongs to the bacterial ribosomal protein bL19 family.

Its function is as follows. This protein is located at the 30S-50S ribosomal subunit interface and may play a role in the structure and function of the aminoacyl-tRNA binding site. The polypeptide is Large ribosomal subunit protein bL19 (Streptococcus mutans serotype c (strain ATCC 700610 / UA159)).